We begin with the raw amino-acid sequence, 67 residues long: MKASEIREKDIVELNKELGELKSELFKLRFQLATNQLENPMKLKDVKKSIARVKTIIREKELSGNNK.

It belongs to the universal ribosomal protein uL29 family.

The polypeptide is Large ribosomal subunit protein uL29 (Ruminiclostridium cellulolyticum (strain ATCC 35319 / DSM 5812 / JCM 6584 / H10) (Clostridium cellulolyticum)).